We begin with the raw amino-acid sequence, 263 residues long: MGCCGSKEKYNGEDVPKSQRLENRPTNDVNGKQPQRQQPPNKRKNNTIRKGAASASQQNNPTSLFEITDLSLKNDIIEGLQEQPQDSDLLAQYGVLLSMEGKNKEAEESLRKAVEVDTDNSRAWQAYGEFLERTNNPKKAKEVYGEAYKHAAPKIALDEDDSSLLLSYAIFIQKSGEIDKAEKLYKRIVTSGARSSESLGRYGLFLLEVKKDVEKGGIYLKDAADIDPPSPEWCTRYSNYLKTYKKDEFEATKYQKRVSLYVN.

The span at 1-25 (MGCCGSKEKYNGEDVPKSQRLENRP) shows a compositional bias: basic and acidic residues. Residues 1-62 (MGCCGSKEKY…ASASQQNNPT (62 aa)) form a disordered region. TPR repeat units lie at residues 87-120 (SDLL…DTDN), 121-154 (SRAW…AAPK), and 162-195 (SSLL…GARS).

In Dictyostelium discoideum (Social amoeba), this protein is TPR repeat-containing protein DDB_G0285095.